The chain runs to 232 residues: 5'-methylthioadenosine/S-adenosylhomocysteine nucleosidase (232 aa).

The active-site Proton acceptor is the Glu12. Residues Gly78, Ile152, and 173 to 174 (ME) each bind substrate. Residue Asp197 is the Proton donor of the active site.

This sequence belongs to the PNP/UDP phosphorylase family. MtnN subfamily. In terms of assembly, homodimer.

It carries out the reaction S-adenosyl-L-homocysteine + H2O = S-(5-deoxy-D-ribos-5-yl)-L-homocysteine + adenine. The enzyme catalyses S-methyl-5'-thioadenosine + H2O = 5-(methylsulfanyl)-D-ribose + adenine. It catalyses the reaction 5'-deoxyadenosine + H2O = 5-deoxy-D-ribose + adenine. It functions in the pathway amino-acid biosynthesis; L-methionine biosynthesis via salvage pathway; S-methyl-5-thio-alpha-D-ribose 1-phosphate from S-methyl-5'-thioadenosine (hydrolase route): step 1/2. Catalyzes the irreversible cleavage of the glycosidic bond in both 5'-methylthioadenosine (MTA) and S-adenosylhomocysteine (SAH/AdoHcy) to adenine and the corresponding thioribose, 5'-methylthioribose and S-ribosylhomocysteine, respectively. Also cleaves 5'-deoxyadenosine, a toxic by-product of radical S-adenosylmethionine (SAM) enzymes, into 5-deoxyribose and adenine. Thus, is required for in vivo function of the radical SAM enzymes biotin synthase and lipoic acid synthase, that are inhibited by 5'-deoxyadenosine accumulation. This chain is 5'-methylthioadenosine/S-adenosylhomocysteine nucleosidase, found in Salmonella dublin (strain CT_02021853).